Reading from the N-terminus, the 353-residue chain is Protein O-mannose kinase (353 aa).

Residues 1–19 (MEKKAHFVKRDFPPREAPS) are Cytoplasmic-facing. Residues 20 to 40 (LLLLLLVVAVLLLNALLYLYL) form a helical; Signal-anchor for type II membrane protein membrane-spanning segment. Residues 41–353 (GNLHGSSGRA…AAMPSTREML (313 aa)) lie on the Lumenal side of the membrane. The Protein kinase domain occupies 83 to 353 (VRKLKCVGEG…AAMPSTREML (271 aa)). N-linked (GlcNAc...) asparagine glycosylation is found at Asn-163 and Asn-237.

This sequence belongs to the protein kinase superfamily. Ser/Thr protein kinase family. STKL subfamily.

The protein localises to the endoplasmic reticulum membrane. The enzyme catalyses 3-O-[beta-D-GalNAc-(1-&gt;3)-beta-D-GlcNAc-(1-&gt;4)-alpha-D-Man]-L-Thr-[protein] + ATP = 3-O-[beta-D-GalNAc-(1-&gt;3)-beta-D-GlcNAc-(1-&gt;4)-(O-6-P-alpha-D-Man)]-Thr-[protein] + ADP + H(+). Functionally, protein O-mannose kinase that specifically mediates phosphorylation at the 6-position of an O-mannose of the trisaccharide (N-acetylgalactosamine (GalNAc)-beta-1,3-N-acetylglucosamine (GlcNAc)-beta-1,4-mannose) to generate phosphorylated O-mannosyl trisaccharide (N-acetylgalactosamine-beta-1,3-N-acetylglucosamine-beta-1,4-(phosphate-6-)mannose). Phosphorylated O-mannosyl trisaccharide is a carbohydrate structure present in alpha-dystroglycan (DAG1), which is required for binding laminin G-like domain-containing extracellular proteins with high affinity. Only shows kinase activity when the GalNAc-beta-3-GlcNAc-beta-terminus is linked to the 4-position of O-mannose, suggesting that this disaccharide serves as the substrate recognition motif. The sequence is that of Protein O-mannose kinase (POMK) from Gallus gallus (Chicken).